The primary structure comprises 565 residues: O-fucosyltransferase 7 (565 aa).

Residues 17 to 37 form a helical; Signal-anchor for type II membrane protein membrane-spanning segment; the sequence is VLIWAICVMTLLCFLTVHIYV. 5 N-linked (GlcNAc...) asparagine glycosylation sites follow: Asn-62, Asn-73, Asn-104, Asn-124, and Asn-190. 327 to 329 provides a ligand contact to substrate; that stretch reads HLR. A glycan (N-linked (GlcNAc...) asparagine) is linked at Asn-441. Residues 515 to 565 are disordered; the sequence is NEIHKTRQGSPRRRKGPASGTKGLERHRSEESFYENPLPDCLCQRDPSKAR. Over residues 520–530 the composition is skewed to basic residues; sequence TRQGSPRRRKG.

Belongs to the glycosyltransferase GT106 family.

It is found in the membrane. It functions in the pathway glycan metabolism. This Arabidopsis thaliana (Mouse-ear cress) protein is O-fucosyltransferase 7.